The following is a 506-amino-acid chain: Aminoaldehyde dehydrogenase 2 (506 aa).

Asp-101 lines the Na(+) pocket. Residues 161-163 (TPW) and 187-190 (KPSE) contribute to the NAD(+) site. Leu-191 serves as a coordination point for Na(+). Residues 241–244 (STET) and Glu-262 contribute to the NAD(+) site. Catalysis depends on Glu-262, which acts as the Proton acceptor. The Nucleophile role is filled by Cys-297. The NAD(+) site is built by Glu-396 and Trp-462.

It belongs to the aldehyde dehydrogenase family.

It carries out the reaction 4-aminobutanal + NAD(+) + H2O = 4-aminobutanoate + NADH + 2 H(+). It catalyses the reaction 3-aminopropanal + NAD(+) + H2O = beta-alanine + NADH + 2 H(+). The enzyme catalyses 4-(trimethylamino)butanal + NAD(+) + H2O = 4-(trimethylamino)butanoate + NADH + 2 H(+). The catalysed reaction is 4-guanidinobutanal + NAD(+) + H2O = 4-guanidinobutanoate + NADH + 2 H(+). Its pathway is amine and polyamine biosynthesis; betaine biosynthesis via choline pathway; betaine from betaine aldehyde: step 1/1. Its function is as follows. Dehydrogenase that catalyzes the oxidation of several aminoaldehydes. Metabolizes and detoxifies aldehyde products of polyamine degradation to non-toxic amino acids. Catalyzes the oxidation of 4-aminobutanal and 3-aminopropanal to 4-aminobutanoate and beta-alanine, respectively. Catalyzes the oxidation of 4-(trimethylamino)butanal and 4-guanidinobutanal to 4-trimethylammoniobutanoate and 4-guanidinobutanoate, respectively. The chain is Aminoaldehyde dehydrogenase 2 from Zea mays (Maize).